The primary structure comprises 246 residues: NH(3)-dependent NAD(+) synthetase (246 aa).

29 to 36 (GLSGGIDS) contributes to the ATP binding site. D35 contributes to the Mg(2+) binding site. R110 contacts deamido-NAD(+). T130 is a binding site for ATP. E135 contacts Mg(2+). The ATP site is built by K159 and S181.

Belongs to the NAD synthetase family. Homodimer.

The catalysed reaction is deamido-NAD(+) + NH4(+) + ATP = AMP + diphosphate + NAD(+) + H(+). It functions in the pathway cofactor biosynthesis; NAD(+) biosynthesis; NAD(+) from deamido-NAD(+) (ammonia route): step 1/1. Its function is as follows. Catalyzes the ATP-dependent amidation of deamido-NAD to form NAD. Uses ammonia as a nitrogen source. The polypeptide is NH(3)-dependent NAD(+) synthetase (Campylobacter jejuni subsp. jejuni serotype O:2 (strain ATCC 700819 / NCTC 11168)).